The chain runs to 356 residues: Acyl-coenzyme A diphosphatase NUDT19 (356 aa).

Residues 10–241 enclose the Nudix hydrolase domain; that stretch reads AATVMLAAGW…IWLAPPQFYE (232 aa). Positions 72–94 are disordered; sequence PRFGLGPEPPRQPPFPGLSHGDA. Over residues 78-87 the composition is skewed to pro residues; the sequence is PEPPRQPPFP. The short motif at 97–118 is the Nudix box element; the sequence is AALPDDVALRICAIRETFEEAG. Mg(2+)-binding residues include E112 and E116. Residue K299 is modified to N6-succinyllysine. The Microbody targeting signal signature appears at 354-356; the sequence is ARL.

Belongs to the Nudix hydrolase family. In terms of assembly, monomer. Mg(2+) is required as a cofactor. The cofactor is Mn(2+).

Its subcellular location is the peroxisome. It carries out the reaction an acyl-CoA + H2O = an acyl-4'-phosphopantetheine + adenosine 3',5'-bisphosphate + 2 H(+). The enzyme catalyses CoA + H2O = (R)-4'-phosphopantetheine + adenosine 3',5'-bisphosphate + 2 H(+). It catalyses the reaction hexanoyl-CoA + H2O = hexanoyl-4'-phosphopantetheine + adenosine 3',5'-bisphosphate + 2 H(+). The catalysed reaction is octanoyl-CoA + H2O = S-octanoyl-4'-phosphopantetheine + adenosine 3',5'-bisphosphate + 2 H(+). It carries out the reaction butanoyl-CoA + H2O = S-butanoyl-4'-phosphopantetheine + adenosine 3',5'-bisphosphate + 2 H(+). The enzyme catalyses propanoyl-CoA + H2O = propanoyl-4'-phosphopantetheine + adenosine 3',5'-bisphosphate + 2 H(+). It catalyses the reaction malonyl-CoA + H2O = malonyl-4'-phosphopantetheine + adenosine 3',5'-bisphosphate + 2 H(+). The catalysed reaction is succinyl-CoA + H2O = succinyl-4'-phosphopantetheine + adenosine 3',5'-bisphosphate + 2 H(+). It carries out the reaction choloyl-CoA + H2O = S-choloyl-4'-phosphopantetheine + adenosine 3',5'-bisphosphate + 2 H(+). The enzyme catalyses 4,8-dimethylnonanoyl-CoA + H2O = S-(4,8-dimethylnonanoyl)-4'-phosphopantetheine + adenosine 3',5'-bisphosphate + 2 H(+). It catalyses the reaction (9Z,12Z,15Z)-octadecatrienoyl-CoA + H2O = S-(9Z,12Z,15Z-octadecatrienoyl)-4'-phosphopantetheine + adenosine 3',5'-bisphosphate + 2 H(+). The catalysed reaction is (9Z,12Z)-octadecadienoyl-CoA + H2O = S-(9Z,12Z-octadecadienoyl)-4'-phosphopantetheine + adenosine 3',5'-bisphosphate + 2 H(+). It carries out the reaction (9Z)-hexadecenoyl-CoA + H2O = S-(9Z-hexadecenoyl)-4'-phosphopantetheine + adenosine 3',5'-bisphosphate + 2 H(+). The enzyme catalyses (9Z)-tetradecenoyl-CoA + H2O = S-(9Z-tetradecenoyl)-4'-phosphopantetheine + adenosine 3',5'-bisphosphate + 2 H(+). It catalyses the reaction (6Z)-octenoyl-CoA + H2O = S-(6Z-octenoyl)-4'-phosphopantetheine + adenosine 3',5'-bisphosphate + 2 H(+). The catalysed reaction is hexadecanoyl-CoA + H2O = S-hexadecanoyl-4'-phosphopantetheine + adenosine 3',5'-bisphosphate + 2 H(+). It carries out the reaction tetradecanoyl-CoA + H2O = tetradecanoyl-4'-phosphopantetheine + adenosine 3',5'-bisphosphate + 2 H(+). The enzyme catalyses dodecanoyl-CoA + H2O = S-dodecanoyl-4'-phosphopantetheine + adenosine 3',5'-bisphosphate + 2 H(+). It catalyses the reaction a 5'-end CoA-ribonucleoside in mRNA + H2O = a 5'-end phospho-adenosine-phospho-ribonucleoside in mRNA + (R)-4'-phosphopantetheine + 2 H(+). In terms of biological role, fatty acyl-coenzyme A (CoA) diphosphatase that hydrolyzes fatty acyl-CoA to yield acyl-4'-phosphopantetheine and adenosine 3',5'-bisphosphate. Mediates the hydrolysis of a wide range of CoA esters, including choloyl-CoA and branched-chain fatty-acyl-CoA esters and at low substrate concentrations medium and long-chain fatty-acyl-CoA esters are the primary substrates. Highest activity seen with medium-chain acyl-CoA esters and higher rates of activity seen with the unsaturated acyl-CoA esters compared with the saturated esters. Exhibits decapping activity towards dpCoA-capped RNAs in vitro. This chain is Acyl-coenzyme A diphosphatase NUDT19 (Nudt19), found in Mus saxicola (Brown spiny mouse).